Reading from the N-terminus, the 184-residue chain is Threonylcarbamoyl-AMP synthase (184 aa).

Residues 1–184 (MNNLENIVEQ…IFTQHIFRQG (184 aa)) form the YrdC-like domain.

It belongs to the SUA5 family. TsaC subfamily.

The protein resides in the cytoplasm. It carries out the reaction L-threonine + hydrogencarbonate + ATP = L-threonylcarbamoyladenylate + diphosphate + H2O. Functionally, required for the formation of a threonylcarbamoyl group on adenosine at position 37 (t(6)A37) in tRNAs that read codons beginning with adenine. Catalyzes the conversion of L-threonine, HCO(3)(-)/CO(2) and ATP to give threonylcarbamoyl-AMP (TC-AMP) as the acyladenylate intermediate, with the release of diphosphate. The polypeptide is Threonylcarbamoyl-AMP synthase (Actinobacillus pleuropneumoniae serotype 7 (strain AP76)).